Consider the following 732-residue polypeptide: Catalase-peroxidase (732 aa).

Positions 97–220 (WHSAGTYRTS…LAAVQMGLIY (124 aa)) form a cross-link, tryptophyl-tyrosyl-methioninium (Trp-Tyr) (with M-246). Catalysis depends on histidine 98, which acts as the Proton acceptor. The segment at residues 220-246 (YVNPEGPDGNPDPVAAGRDIRETFARM) is a cross-link (tryptophyl-tyrosyl-methioninium (Tyr-Met) (with W-97)). Histidine 261 is a binding site for heme b.

The protein belongs to the peroxidase family. Peroxidase/catalase subfamily. As to quaternary structure, homodimer or homotetramer. Heme b serves as cofactor. Formation of the three residue Trp-Tyr-Met cross-link is important for the catalase, but not the peroxidase activity of the enzyme.

The catalysed reaction is H2O2 + AH2 = A + 2 H2O. The enzyme catalyses 2 H2O2 = O2 + 2 H2O. Its function is as follows. Bifunctional enzyme with both catalase and broad-spectrum peroxidase activity. This chain is Catalase-peroxidase, found in Chlorobium phaeobacteroides (strain DSM 266 / SMG 266 / 2430).